A 367-amino-acid chain; its full sequence is Chorismate synthase (367 aa).

NADP(+) is bound at residue R48. FMN-binding positions include 125 to 127 (RSS), 241 to 242 (NA), G285, 300 to 304 (KPTSS), and R326.

Belongs to the chorismate synthase family. Homotetramer. FMNH2 is required as a cofactor.

It carries out the reaction 5-O-(1-carboxyvinyl)-3-phosphoshikimate = chorismate + phosphate. Its pathway is metabolic intermediate biosynthesis; chorismate biosynthesis; chorismate from D-erythrose 4-phosphate and phosphoenolpyruvate: step 7/7. Functionally, catalyzes the anti-1,4-elimination of the C-3 phosphate and the C-6 proR hydrogen from 5-enolpyruvylshikimate-3-phosphate (EPSP) to yield chorismate, which is the branch point compound that serves as the starting substrate for the three terminal pathways of aromatic amino acid biosynthesis. This reaction introduces a second double bond into the aromatic ring system. In Dinoroseobacter shibae (strain DSM 16493 / NCIMB 14021 / DFL 12), this protein is Chorismate synthase.